The primary structure comprises 359 residues: Hyaluronan and proteoglycan link protein 3 (359 aa).

The first 17 residues, 1-17, serve as a signal peptide directing secretion; that stretch reads MSLLFLVLLSPFPCVLG. Positions 48–164 constitute an Ig-like V-type domain; it reads KLVVETTEES…ESGLVELELR (117 aa). Cystine bridges form between C70–C146, C188–C259, C212–C233, C286–C355, and C311–C332. Link domains lie at 166–261 and 266–357; these read VVFP…FCFA and GRVY…YCYV.

This sequence belongs to the HAPLN family.

The protein resides in the secreted. Its subcellular location is the extracellular space. It localises to the extracellular matrix. Its function is as follows. May function in hyaluronic acid binding. The protein is Hyaluronan and proteoglycan link protein 3 (Hapln3) of Mus musculus (Mouse).